The following is a 361-amino-acid chain: Fructose-1,6-bisphosphatase class 1 2 (361 aa).

Mg(2+)-binding residues include glutamate 110, aspartate 134, leucine 136, and aspartate 137. Residues 137–140, asparagine 231, tyrosine 264, and lysine 294 each bind substrate; that span reads DGSS. Glutamate 300 contributes to the Mg(2+) binding site.

This sequence belongs to the FBPase class 1 family. Homotetramer. Mg(2+) is required as a cofactor.

The protein resides in the cytoplasm. The enzyme catalyses beta-D-fructose 1,6-bisphosphate + H2O = beta-D-fructose 6-phosphate + phosphate. It functions in the pathway carbohydrate biosynthesis; gluconeogenesis. This Salinibacter ruber (strain DSM 13855 / M31) protein is Fructose-1,6-bisphosphatase class 1 2.